The sequence spans 813 residues: LPS-assembly protein LptD (813 aa).

Residues 1–22 (MRRALRLLPLPLSIAICLPAMA) form the signal peptide.

It belongs to the LptD family. As to quaternary structure, component of the lipopolysaccharide transport and assembly complex. Interacts with LptE and LptA.

The protein localises to the cell outer membrane. Its function is as follows. Together with LptE, is involved in the assembly of lipopolysaccharide (LPS) at the surface of the outer membrane. The chain is LPS-assembly protein LptD from Xanthomonas oryzae pv. oryzae (strain KACC10331 / KXO85).